The chain runs to 344 residues: tRNA(Ile)-lysidine synthase (344 aa).

ATP is bound at residue 43–48 (SGGADS).

It belongs to the tRNA(Ile)-lysidine synthase family.

The protein localises to the cytoplasm. The enzyme catalyses cytidine(34) in tRNA(Ile2) + L-lysine + ATP = lysidine(34) in tRNA(Ile2) + AMP + diphosphate + H(+). In terms of biological role, ligates lysine onto the cytidine present at position 34 of the AUA codon-specific tRNA(Ile) that contains the anticodon CAU, in an ATP-dependent manner. Cytidine is converted to lysidine, thus changing the amino acid specificity of the tRNA from methionine to isoleucine. The protein is tRNA(Ile)-lysidine synthase of Bordetella parapertussis (strain 12822 / ATCC BAA-587 / NCTC 13253).